The sequence spans 185 residues: Peptidyl-tRNA hydrolase (185 aa).

Tyr-14 lines the tRNA pocket. Catalysis depends on His-19, which acts as the Proton acceptor. TRNA is bound by residues Tyr-65, Asn-67, and Asn-113.

This sequence belongs to the PTH family. Monomer.

The protein localises to the cytoplasm. The catalysed reaction is an N-acyl-L-alpha-aminoacyl-tRNA + H2O = an N-acyl-L-amino acid + a tRNA + H(+). In terms of biological role, hydrolyzes ribosome-free peptidyl-tRNAs (with 1 or more amino acids incorporated), which drop off the ribosome during protein synthesis, or as a result of ribosome stalling. Functionally, catalyzes the release of premature peptidyl moieties from peptidyl-tRNA molecules trapped in stalled 50S ribosomal subunits, and thus maintains levels of free tRNAs and 50S ribosomes. This is Peptidyl-tRNA hydrolase from Rickettsia prowazekii (strain Madrid E).